We begin with the raw amino-acid sequence, 159 residues long: Small ribosomal subunit protein uS17x (159 aa).

It belongs to the universal ribosomal protein uS17 family.

The protein localises to the cytoplasm. The protein is Small ribosomal subunit protein uS17x (RPS11C) of Arabidopsis thaliana (Mouse-ear cress).